The following is a 187-amino-acid chain: Insulin-like growth factor 2 (187 aa).

An N-terminal signal peptide occupies residues 1–23 (MCAARQILLLLLAFLAYALDSAA). The segment at 25–51 (YGTAETLCGGELVDTLQFVCGDRGFYF) is b. 3 disulfides stabilise this stretch: Cys32–Cys71, Cys44–Cys84, and Cys70–Cys75. The c stretch occupies residues 52-64 (SRPVGRNNRRINR). An a region spans residues 64 to 85 (RGIVEECCFRSCDLALLETYCA). The segment at 86 to 91 (KSVKSE) is d. A propeptide spans 92–187 (RDLSATSLAG…ASPEATGPQE (96 aa)) (e peptide). A disordered region spans residues 162–187 (HRPLISLPSQRPPAPRASPEATGPQE).

The protein belongs to the insulin family.

Its subcellular location is the secreted. Its function is as follows. The insulin-like growth factors, isolated from plasma, are structurally and functionally related to insulin but have a much higher growth-promoting activity. Acts as a ligand for integrin which is required for IGF2 signaling. The polypeptide is Insulin-like growth factor 2 (Gallus gallus (Chicken)).